The chain runs to 159 residues: SsrA-binding protein (159 aa).

The disordered stretch occupies residues Lys-132–Asp-159.

It belongs to the SmpB family.

It localises to the cytoplasm. Functionally, required for rescue of stalled ribosomes mediated by trans-translation. Binds to transfer-messenger RNA (tmRNA), required for stable association of tmRNA with ribosomes. tmRNA and SmpB together mimic tRNA shape, replacing the anticodon stem-loop with SmpB. tmRNA is encoded by the ssrA gene; the 2 termini fold to resemble tRNA(Ala) and it encodes a 'tag peptide', a short internal open reading frame. During trans-translation Ala-aminoacylated tmRNA acts like a tRNA, entering the A-site of stalled ribosomes, displacing the stalled mRNA. The ribosome then switches to translate the ORF on the tmRNA; the nascent peptide is terminated with the 'tag peptide' encoded by the tmRNA and targeted for degradation. The ribosome is freed to recommence translation, which seems to be the essential function of trans-translation. This is SsrA-binding protein from Pseudomonas aeruginosa (strain LESB58).